The following is a 153-amino-acid chain: MESWIFLGLILLIAYLGKNSSLLIAGAVVIVIKLFPFLSQKLYPVIQAKGINWGVTIISVAILIPIATGQIQFKDLINAMKTPAGWIAVVCGILVAILSKHGVNLLSSTPQVTVALVIGTIIGVVFLKGVAAGPVIAAGITYYLVTLLNLSFS.

Transmembrane regions (helical) follow at residues 4–24 (WIFL…SLLI), 26–46 (GAVV…YPVI), 51–71 (INWG…TGQI), 86–106 (WIAV…VNLL), and 116–136 (LVIG…GPVI).

This sequence belongs to the UPF0756 family.

It localises to the cell membrane. The chain is UPF0756 membrane protein LSL_0936 from Ligilactobacillus salivarius (strain UCC118) (Lactobacillus salivarius).